Here is a 393-residue protein sequence, read N- to C-terminus: Sialyltransferase-like protein 1 (393 aa).

Residues 1–8 (MKRPLRRP) are Cytoplasmic-facing. The chain crosses the membrane as a helical; Signal-anchor for type II membrane protein span at residues 9–27 (FAVLLFVVLCAAASFPSVL). Over 28–393 (RRSVGPAPVL…IAVPPVVFYH (366 aa)) the chain is Lumenal. Residues Asn49, Asn212, and Asn258 are each glycosylated (N-linked (GlcNAc...) asparagine).

It belongs to the glycosyltransferase 29 family.

It localises to the golgi apparatus membrane. Its function is as follows. Possesses sialyltransferase-like activity in vitro. Transfers sialic acid to the oligosaccharide Gal-beta-1,3-GalNAc and to glycoproteins such as asialofetuin, alpha-1-acid glycoprotein (NeuAc-alpha-2,3-Gal-beta-1,3-GalNAc-) and andasialo-alpha-1-acid glycoprotein. The transferred sialic acid is linked to galactose of Gal-beta-1,3-GalNAc through alpha-2,6-linkage. The protein is Sialyltransferase-like protein 1 of Oryza sativa subsp. indica (Rice).